The sequence spans 111 residues: Translation initiation factor 1A 1 (111 aa).

The segment at 1–28 (MTLADLKKPTSRASPSTEETVTRVRTPR) is disordered. Residues 22-96 (TRVRTPRREN…EKADVIWKYT (75 aa)) form the S1-like domain.

The protein belongs to the eIF-1A family.

Its function is as follows. Seems to be required for maximal rate of protein biosynthesis. Enhances ribosome dissociation into subunits and stabilizes the binding of the initiator Met-tRNA(I) to 40 S ribosomal subunits. The chain is Translation initiation factor 1A 1 (eIF1A1) from Methanosarcina mazei (strain ATCC BAA-159 / DSM 3647 / Goe1 / Go1 / JCM 11833 / OCM 88) (Methanosarcina frisia).